Reading from the N-terminus, the 130-residue chain is Anti-adapter protein IraD (130 aa).

Belongs to the GpW/Gp25 family. IraD subfamily. Interacts with RssB.

The protein resides in the cytoplasm. Functionally, inhibits RpoS proteolysis by regulating RssB activity, thereby increasing the stability of the sigma stress factor RpoS during oxidative stress. Its effect on RpoS stability is due to its interaction with RssB, which probably blocks the interaction of RssB with RpoS, and the consequent delivery of the RssB-RpoS complex to the ClpXP protein degradation pathway. This chain is Anti-adapter protein IraD, found in Escherichia coli O9:H4 (strain HS).